The sequence spans 312 residues: Ribosomal RNA small subunit methyltransferase H (312 aa).

Residues 34-36 (GGH), aspartate 54, leucine 83, aspartate 99, and glutamine 106 contribute to the S-adenosyl-L-methionine site.

Belongs to the methyltransferase superfamily. RsmH family.

Its subcellular location is the cytoplasm. The catalysed reaction is cytidine(1402) in 16S rRNA + S-adenosyl-L-methionine = N(4)-methylcytidine(1402) in 16S rRNA + S-adenosyl-L-homocysteine + H(+). Its function is as follows. Specifically methylates the N4 position of cytidine in position 1402 (C1402) of 16S rRNA. The protein is Ribosomal RNA small subunit methyltransferase H of Rubrobacter xylanophilus (strain DSM 9941 / JCM 11954 / NBRC 16129 / PRD-1).